The sequence spans 261 residues: Tryptophan synthase alpha chain (261 aa).

Active-site proton acceptor residues include E47 and D58.

It belongs to the TrpA family. As to quaternary structure, tetramer of two alpha and two beta chains.

It carries out the reaction (1S,2R)-1-C-(indol-3-yl)glycerol 3-phosphate + L-serine = D-glyceraldehyde 3-phosphate + L-tryptophan + H2O. The protein operates within amino-acid biosynthesis; L-tryptophan biosynthesis; L-tryptophan from chorismate: step 5/5. Its function is as follows. The alpha subunit is responsible for the aldol cleavage of indoleglycerol phosphate to indole and glyceraldehyde 3-phosphate. In Neisseria meningitidis serogroup A / serotype 4A (strain DSM 15465 / Z2491), this protein is Tryptophan synthase alpha chain.